A 50-amino-acid chain; its full sequence is Protein hunchback (50 aa).

C2H2-type zinc fingers lie at residues 1–5, 11–33, and 39–50; these read HILKH, IRCPECNYTCVNRSMLTSHMKSH, and YRCLDCNYATKY.

It belongs to the hunchback C2H2-type zinc-finger protein family.

It localises to the nucleus. Its function is as follows. Gap class segmentation protein that controls development of head structures. This is Protein hunchback (hb) from Bradysia coprophila (Dark-winged fungus gnat).